Consider the following 292-residue polypeptide: MNWQAVSVATKNEAIETVADILLQVGAQGVQINDHDAISVTAYYPDDEQLGETITAIQKALKHLSDIGMSVAPATITVNGIQQKDWEDNWKAYYHAERVTRHFTVVPSWETYHPNQIDELPIIMDPKLAFGTGTHETTRLMIQALENVVRGGESMIDVGTGSGVLAVAAKQLGVAHVLATDIDEMSVNVAKENLRLNPVAQDVTVVASDLLADVVISPVDLIVANILADVIERLIPQTTTLLKPGGLFLVSGIYDNIALHIEDVLRANDYTIVQKSQMGEWHGYIAQLKEKN.

Thr138, Gly159, Asp181, and Asn225 together coordinate S-adenosyl-L-methionine.

This sequence belongs to the methyltransferase superfamily. PrmA family.

The protein resides in the cytoplasm. It carries out the reaction L-lysyl-[protein] + 3 S-adenosyl-L-methionine = N(6),N(6),N(6)-trimethyl-L-lysyl-[protein] + 3 S-adenosyl-L-homocysteine + 3 H(+). Functionally, methylates ribosomal protein L11. This chain is Ribosomal protein L11 methyltransferase, found in Leuconostoc citreum (strain KM20).